Here is a 328-residue protein sequence, read N- to C-terminus: Tetraacyldisaccharide 4'-kinase (328 aa).

An ATP-binding site is contributed by 55 to 62; it reads TAGGNGKT.

The protein belongs to the LpxK family.

The enzyme catalyses a lipid A disaccharide + ATP = a lipid IVA + ADP + H(+). The protein operates within glycolipid biosynthesis; lipid IV(A) biosynthesis; lipid IV(A) from (3R)-3-hydroxytetradecanoyl-[acyl-carrier-protein] and UDP-N-acetyl-alpha-D-glucosamine: step 6/6. Transfers the gamma-phosphate of ATP to the 4'-position of a tetraacyldisaccharide 1-phosphate intermediate (termed DS-1-P) to form tetraacyldisaccharide 1,4'-bis-phosphate (lipid IVA). The protein is Tetraacyldisaccharide 4'-kinase of Escherichia coli (strain K12 / MC4100 / BW2952).